The sequence spans 517 residues: Cytochrome P450 monooxygenase ausI (517 aa).

Residues 8–28 (LAPLGQPWIAGLVVVSAVLYL) form a helical membrane-spanning segment. Cys-457 contacts heme.

It belongs to the cytochrome P450 family. Heme is required as a cofactor.

The protein localises to the membrane. It functions in the pathway secondary metabolite biosynthesis; terpenoid biosynthesis. Cytochrome P450 monooxygenase; part of the gene cluster that mediates the biosynthesis of calidodehydroaustin, a fungal meroterpenoid. The first step of the pathway is the synthesis of 3,5-dimethylorsellinic acid by the polyketide synthase ausA. 3,5-dimethylorsellinic acid is then prenylated by the polyprenyl transferase ausN. Further epoxidation by the FAD-dependent monooxygenase ausM and cyclization by the probable terpene cyclase ausL lead to the formation of protoaustinoid A. Protoaustinoid A is then oxidized to spiro-lactone preaustinoid A3 by the combined action of the FAD-binding monooxygenases ausB and ausC, and the dioxygenase ausE. Acid-catalyzed keto-rearrangement and ring contraction of the tetraketide portion of preaustinoid A3 by ausJ lead to the formation of preaustinoid A4. The aldo-keto reductase ausK, with the help of ausH, is involved in the next step by transforming preaustinoid A4 into isoaustinone which is in turn hydroxylated by the P450 monooxygenase ausI to form austinolide. The cytochrome P450 monooxygenase ausG modifies austinolide to austinol. Austinol is further acetylated to austin by the O-acetyltransferase ausP, which spontaneously changes to dehydroaustin. The cytochrome P450 monooxygenase ausR then converts dehydroaustin is into 7-dehydrodehydroaustin. The hydroxylation catalyzed by ausR permits the O-acetyltransferase ausQ to add an additional acetyl group to the molecule, leading to the formation of acetoxydehydroaustin. The short chain dehydrogenase ausT catalyzes the reduction of the double bond present between carbon atoms 1 and 2 to convert 7-dehydrodehydroaustin into 1,2-dihydro-7-hydroxydehydroaustin. AusQ catalyzes not only an acetylation reaction but also the addition of the PKS ausV diketide product to 1,2-dihydro-7-hydroxydehydroaustin, forming precalidodehydroaustin. Finally, the iron/alpha-ketoglutarate-dependent dioxygenase converts precalidodehydroaustin into calidodehydroaustin. The sequence is that of Cytochrome P450 monooxygenase ausI from Aspergillus calidoustus.